Consider the following 300-residue polypeptide: NAD kinase (300 aa).

The active-site Proton acceptor is the Asp80. NAD(+)-binding positions include 80 to 81 (DG), 154 to 155 (ND), Arg165, Arg182, Asp184, 195 to 200 (TAYALS), and Gln253.

It belongs to the NAD kinase family. It depends on a divalent metal cation as a cofactor.

It localises to the cytoplasm. The catalysed reaction is NAD(+) + ATP = ADP + NADP(+) + H(+). Functionally, involved in the regulation of the intracellular balance of NAD and NADP, and is a key enzyme in the biosynthesis of NADP. Catalyzes specifically the phosphorylation on 2'-hydroxyl of the adenosine moiety of NAD to yield NADP. The protein is NAD kinase of Aromatoleum aromaticum (strain DSM 19018 / LMG 30748 / EbN1) (Azoarcus sp. (strain EbN1)).